The chain runs to 232 residues: Phosphatidylserine decarboxylase proenzyme (232 aa).

Ser190 functions as the Schiff-base intermediate with substrate; via pyruvic acid in the catalytic mechanism. Ser190 bears the Pyruvic acid (Ser); by autocatalysis mark.

This sequence belongs to the phosphatidylserine decarboxylase family. PSD-A subfamily. Heterodimer of a large membrane-associated beta subunit and a small pyruvoyl-containing alpha subunit. Pyruvate serves as cofactor. Is synthesized initially as an inactive proenzyme. Formation of the active enzyme involves a self-maturation process in which the active site pyruvoyl group is generated from an internal serine residue via an autocatalytic post-translational modification. Two non-identical subunits are generated from the proenzyme in this reaction, and the pyruvate is formed at the N-terminus of the alpha chain, which is derived from the carboxyl end of the proenzyme. The post-translation cleavage follows an unusual pathway, termed non-hydrolytic serinolysis, in which the side chain hydroxyl group of the serine supplies its oxygen atom to form the C-terminus of the beta chain, while the remainder of the serine residue undergoes an oxidative deamination to produce ammonia and the pyruvoyl prosthetic group on the alpha chain.

The protein localises to the cell membrane. It carries out the reaction a 1,2-diacyl-sn-glycero-3-phospho-L-serine + H(+) = a 1,2-diacyl-sn-glycero-3-phosphoethanolamine + CO2. The protein operates within phospholipid metabolism; phosphatidylethanolamine biosynthesis; phosphatidylethanolamine from CDP-diacylglycerol: step 2/2. Its function is as follows. Catalyzes the formation of phosphatidylethanolamine (PtdEtn) from phosphatidylserine (PtdSer). The chain is Phosphatidylserine decarboxylase proenzyme from Bradyrhizobium sp. (strain BTAi1 / ATCC BAA-1182).